The chain runs to 73 residues: Protein SlyX homolog (73 aa).

It belongs to the SlyX family.

This is Protein SlyX homolog from Pasteurella multocida (strain Pm70).